The chain runs to 82 residues: Mu-conotoxin MrVIB (82 aa).

Positions 1–22 (MKLTCMMIVAVLFLTAWTLVMA) are cleaved as a signal peptide. A propeptide spanning residues 23 to 49 (DDSNNGLANHFLKSRDEMEDPEASKLE) is cleaved from the precursor. 3 disulfide bridges follow: C53–C71, C60–C76, and C70–C81.

It belongs to the conotoxin O1 superfamily. Expressed by the venom duct.

It localises to the secreted. Functionally, muO-conotoxins are gating-modifier toxins that inhibit sodium current by trapping the domain II voltage sensor in the closed position to prevent opening of the sodium channel. This toxin has a preference for Nav1.4/SCN4A over Nav1.2/SCN2A sodium channels. It blocks Nav channels by interacting mainly with the C-terminal part of the pore loop of domain-3. It also blocks fast-inactivating calcium current. Blocks Nav1.8/SCN10A sodium channels and has potent and long-lasting local anesthetic effects. It can also block propagation of action potentials in A- and C-fibers in sciatic nerve as well as skeletal muscle in isolated preparations. The protein is Mu-conotoxin MrVIB of Conus marmoreus (Marble cone).